The sequence spans 160 residues: uncharacterized protein (160 aa).

The N-acetyltransferase domain maps to 7–151 (LLINFKTLEE…NPYIWHPDMD (145 aa)).

This is an uncharacterized protein from Bacillus velezensis (strain DSM 23117 / BGSC 10A6 / LMG 26770 / FZB42) (Bacillus amyloliquefaciens subsp. plantarum).